We begin with the raw amino-acid sequence, 396 residues long: 1-deoxy-D-xylulose 5-phosphate reductoisomerase (396 aa).

Threonine 17, glycine 18, serine 19, isoleucine 20, asparagine 47, and asparagine 130 together coordinate NADPH. Lysine 131 provides a ligand contact to 1-deoxy-D-xylulose 5-phosphate. Residue glutamate 132 coordinates NADPH. Residue aspartate 156 coordinates Mn(2+). 1-deoxy-D-xylulose 5-phosphate is bound by residues serine 157, glutamate 158, serine 182, and histidine 205. Position 158 (glutamate 158) interacts with Mn(2+). Residue glycine 211 coordinates NADPH. 1-deoxy-D-xylulose 5-phosphate contacts are provided by serine 218, asparagine 223, lysine 224, and glutamate 227. Glutamate 227 serves as a coordination point for Mn(2+).

Belongs to the DXR family. It depends on Mg(2+) as a cofactor. Mn(2+) serves as cofactor.

The catalysed reaction is 2-C-methyl-D-erythritol 4-phosphate + NADP(+) = 1-deoxy-D-xylulose 5-phosphate + NADPH + H(+). The protein operates within isoprenoid biosynthesis; isopentenyl diphosphate biosynthesis via DXP pathway; isopentenyl diphosphate from 1-deoxy-D-xylulose 5-phosphate: step 1/6. Catalyzes the NADPH-dependent rearrangement and reduction of 1-deoxy-D-xylulose-5-phosphate (DXP) to 2-C-methyl-D-erythritol 4-phosphate (MEP). In Rhizobium etli (strain CIAT 652), this protein is 1-deoxy-D-xylulose 5-phosphate reductoisomerase.